The sequence spans 352 residues: RAD51-associated protein 1 (352 aa).

Positions 1–10 are enriched in basic residues; the sequence is MVRPVRHKKP. 2 disordered regions span residues 1-78 and 115-144; these read MVRP…TFSI and TNVQNSQDKSIEKHGSSKIETMNKSPHISN. 2 positions are modified to phosphoserine: Ser19 and Ser21. Residues 30 to 49 are interaction with DNA; the sequence is VPLNKKSRTAPKELKQDKPK. The span at 39 to 72 shows a compositional bias: basic and acidic residues; that stretch reads APKELKQDKPKPNLNNLRKEEIPVQEKTPKKRLP. Thr66 is modified (phosphothreonine). Phosphoserine occurs at positions 120 and 124. Positions 132 to 144 are enriched in polar residues; the sequence is KIETMNKSPHISN. An SIM motif motif is present at residues 154–159; that stretch reads LDKITV. Residues 162–323 form a disordered region; sequence DVGGVQGKRK…RSSSSPLVVV (162 aa). A compositionally biased stretch (acidic residues) spans 188–221; sequence SDGDSANDTEPDFAPGEDSEDDSDFCESEDNDED. The segment covering 229-247 has biased composition (basic and acidic residues); that stretch reads VKEIKKKEVKVKSPVEKKE. The segment at 243–304 is interaction with DNA; it reads VEKKEKKSKS…PSAESKKPKW (62 aa). Lys251 participates in a covalent cross-link: Glycyl lysine isopeptide (Lys-Gly) (interchain with G-Cter in ubiquitin; alternate). Lys269 participates in a covalent cross-link: Glycyl lysine isopeptide (Lys-Gly) (interchain with G-Cter in SUMO). Over residues 270 to 284 the composition is skewed to polar residues; the sequence is SESQSLPKKVSLSSD. Ser280 carries the post-translational modification Phosphoserine. Positions 304–307 match the WVPP motif motif; the sequence is WVPP. A compositionally biased stretch (low complexity) spans 306–323; it reads PPAASGGSRSSSSPLVVV. The segment at 313–352 is interaction with RAD51; the sequence is SRSSSSPLVVVSVKSPNQSLRLGLSRLARVKPLHPNATST. Ser327 carries the phosphoserine modification.

In terms of assembly, monomer; elongated monodisperse monomer. Interacts (via C-terminal region) with RAD51; the interaction is direct. Interacts (via SIM motif) with WDR48/UAF1; WDR48/UAF1 and RAD51AP1 cooperate together to stimulate RAD51-mediated homologous recombination (HR). Interacts (via WVPP motif) with DMC1; the interaction is direct. Interacts with PALB2. Interacts with RAD52. Does not interact with DMC1; lack of interaction is caused by the absence of the WVPP motif in this isoform. Post-translationally, sumoylation with SUMO2/3 by NSMCE2/MMS21 promotes stabilization, possibly by preventing ubiquitination. Sumoylation is required for alternative lengthening of telomeres (ALT) pathway. As to expression, highly expressed in testis and thymus. Lower levels in colon and small intestine. Little or no expression in spleen, prostate, ovary and peripheral blood leukocytes.

Its subcellular location is the chromosome. It localises to the nucleus. The protein localises to the telomere. Structure-specific DNA-binding protein involved in DNA repair by promoting RAD51-mediated homologous recombination. Acts by stimulating D-Loop formation by RAD51: specifically enhances joint molecule formation through its structure-specific DNA interaction and its interaction with RAD51. Binds single-stranded DNA (ssDNA), double-stranded DNA (dsDNA) and secondary DNA structures, such as D-loop structures: has a strong preference for branched-DNA structures that are obligatory intermediates during joint molecule formation. Cooperates with WDR48/UAF1 to stimulate RAD51-mediated homologous recombination: both WDR48/UAF1 and RAD51AP1 have coordinated role in DNA-binding during homologous recombination and DNA repair. WDR48/UAF1 and RAD51AP1 also have a coordinated role in DNA-binding to promote USP1-mediated deubiquitination of FANCD2. Also involved in meiosis by promoting DMC1-mediated homologous meiotic recombination. Key mediator of alternative lengthening of telomeres (ALT) pathway, a homology-directed repair mechanism of telomere elongation that controls proliferation in aggressive cancers, by stimulating homologous recombination. May also bind RNA; additional evidences are however required to confirm RNA-binding in vivo. The sequence is that of RAD51-associated protein 1 from Homo sapiens (Human).